The chain runs to 245 residues: OVARIAN TUMOR DOMAIN-containing deubiquitinating enzyme 11 (245 aa).

The disordered stretch occupies residues 1 to 37; sequence MDENHRNPFANASTSARASGSTSASSNSSFSSSVADT. A compositionally biased stretch (low complexity) spans 10–35; it reads ANASTSARASGSTSASSNSSFSSSVA. An OTU domain is found at 101–225; sequence LAELQMEGDG…EVHYNSLYAN (125 aa). Aspartate 109 is an active-site residue. The active-site Nucleophile is the cysteine 112. Histidine 218 is a catalytic residue.

The protein belongs to the peptidase C85 family.

It carries out the reaction Thiol-dependent hydrolysis of ester, thioester, amide, peptide and isopeptide bonds formed by the C-terminal Gly of ubiquitin (a 76-residue protein attached to proteins as an intracellular targeting signal).. Functionally, hydrolase that can remove conjugated ubiquitin from proteins in vitro and may therefore play an important regulatory role at the level of protein turnover by preventing degradation. Inactive cysteine protease. This chain is OVARIAN TUMOR DOMAIN-containing deubiquitinating enzyme 11, found in Arabidopsis thaliana (Mouse-ear cress).